Consider the following 766-residue polypeptide: Single-minded homolog 1 (766 aa).

The bHLH domain maps to 1 to 53 (MKEKSKNAARTRREKENSEFYELAKLLPLPSAITSQLDKASIIRLTTSYLKMR). 2 PAS domains span residues 77–147 (GREL…QPYH) and 218–288 (PPSA…LVKG). One can recognise a PAC domain in the interval 292 to 335 (TKYYRFLAKHGGWVWVQSYATIVHNSRSSRPHCIVSVNYVLTDT). The 431-residue stretch at 336–766 (EYKGLQLSLD…GTSVIITNGS (431 aa)) folds into the Single-minded C-terminal domain. A compositionally biased stretch (polar residues) spans 353–365 (AFSYTSSSTPTMT). Disordered regions lie at residues 353–431 (AFSY…SQHD) and 528–563 (WDEDSVVSSPDPGSASESGDRYRTEQYQSSPHEPSK). The Nuclear localization signal motif lies at 368-387 (RKGAKSRLSSSKSKSRTSPY). Positions 373 to 385 (SRLSSSKSKSRTS) are enriched in low complexity. Positions 394–404 (HTERSESDHDS) are enriched in basic and acidic residues.

As to quaternary structure, efficient DNA binding requires dimerization with another bHLH protein. Heterodimer; forms a heterodimer with ARNT, ARNT2.

The protein resides in the nucleus. In terms of biological role, transcriptional factor that may have pleiotropic effects during embryogenesis and in the adult. This chain is Single-minded homolog 1 (SIM1), found in Pan paniscus (Pygmy chimpanzee).